The primary structure comprises 225 residues: NAD(P)H-quinone oxidoreductase subunit K, chloroplastic (225 aa).

[4Fe-4S] cluster is bound by residues Cys43, Cys44, Cys108, and Cys139.

It belongs to the complex I 20 kDa subunit family. In terms of assembly, NDH is composed of at least 16 different subunits, 5 of which are encoded in the nucleus. It depends on [4Fe-4S] cluster as a cofactor.

It localises to the plastid. The protein resides in the chloroplast thylakoid membrane. The enzyme catalyses a plastoquinone + NADH + (n+1) H(+)(in) = a plastoquinol + NAD(+) + n H(+)(out). It catalyses the reaction a plastoquinone + NADPH + (n+1) H(+)(in) = a plastoquinol + NADP(+) + n H(+)(out). Functionally, NDH shuttles electrons from NAD(P)H:plastoquinone, via FMN and iron-sulfur (Fe-S) centers, to quinones in the photosynthetic chain and possibly in a chloroplast respiratory chain. The immediate electron acceptor for the enzyme in this species is believed to be plastoquinone. Couples the redox reaction to proton translocation, and thus conserves the redox energy in a proton gradient. The protein is NAD(P)H-quinone oxidoreductase subunit K, chloroplastic of Platanus occidentalis (Sycamore).